A 1022-amino-acid polypeptide reads, in one-letter code: D-2-hydroxyglutarate dehydrogenase (1022 aa).

The FAD-binding PCMH-type domain occupies 53-286 (YQLLPDAVLF…SEARLDITPL (234 aa)). (R)-2-hydroxyglutarate contacts are provided by arginine 407 and histidine 505. Residues 667–700 (FSHEVKEAMSGCLACKACSTQCPIKIDVPAFRSR) form the 4Fe-4S ferredoxin-type domain. Residues cysteine 678, cysteine 681, cysteine 684, and cysteine 688 each coordinate [4Fe-4S] cluster.

In the N-terminal section; belongs to the FAD-binding oxidoreductase/transferase type 4 family. In terms of assembly, homotetramer. [4Fe-4S] cluster is required as a cofactor. It depends on FAD as a cofactor.

The catalysed reaction is (R)-2-hydroxyglutarate + A = 2-oxoglutarate + AH2. Activity is completely inhibited by the addition of 0.5 mM Mn(2+), Ni(2+), or Co(2+) and partially inhibited by 0.5 mM Zn(2+). Its function is as follows. Catalyzes the oxidation of D-2-hydroxyglutarate (D-2-HGA) to 2-oxoglutarate. Appears to be the only D2HGDH in P.ananatis, providing the way to recycle D-2-HGA produced during L-serine synthesis by SerA, by converting it back to 2-oxoglutarate. Is involved in the utilization of D-2-HGA, that can support the growth of P.ananatis as a sole carbon source, although it barely serves as a good substrate. The physiological molecule that functions as the primary electron acceptor during D-2-HGA oxidation by YdiJ in P.ananatis is unknown. Shows strict substrate specificity towards D-2-HGA, since it has no detectable activity on L-2-hydroxyglutarate, L-malate, D-malate, L-lactate, D-lactate, L-tartrate, D-tartrate, L-glycerate, D-glycerate, glutarate, or pyruvate. The protein is D-2-hydroxyglutarate dehydrogenase of Pantoea ananatis (strain AJ13355).